The sequence spans 319 residues: Cytochrome c biogenesis protein CcsA (319 aa).

7 consecutive transmembrane segments (helical) span residues 9-29, 44-64, 71-91, 143-163, 225-245, 259-273, and 286-306; these read ILTH…LITL, GVIG…AYSG, LYES…FPYF, MVLG…LLVI, IISL…VWAN, TWAF…IYLH, and AIVA…VNLL.

Belongs to the CcmF/CycK/Ccl1/NrfE/CcsA family. As to quaternary structure, may interact with Ccs1.

The protein resides in the plastid. Its subcellular location is the chloroplast thylakoid membrane. Functionally, required during biogenesis of c-type cytochromes (cytochrome c6 and cytochrome f) at the step of heme attachment. This chain is Cytochrome c biogenesis protein CcsA, found in Oenothera glazioviana (Large-flowered evening primrose).